The primary structure comprises 69 residues: Conotoxin Eb6.14 (69 aa).

Positions 1–17 (VLIIAVLFLTACQLTTA) are cleaved as a signal peptide. A propeptide spanning residues 18 to 41 (ETYSRGRQKHRARRSTDKNSKWTR) is cleaved from the precursor. Disulfide bonds link cysteine 43–cysteine 57, cysteine 50–cysteine 61, and cysteine 56–cysteine 68.

It belongs to the conotoxin O1 superfamily. Expressed by the venom duct.

The protein resides in the secreted. The chain is Conotoxin Eb6.14 (E1) from Conus ebraeus (Hebrew cone).